A 224-amino-acid polypeptide reads, in one-letter code: C-reactive protein (224 aa).

A signal peptide spans 1–18 (MEKLLCFLVLTSLSHAFG). The residue at position 19 (Q19) is a Pyrrolidone carboxylic acid. The region spanning 23-224 (SRKAFVFPKE…EVFTKPQLWP (202 aa)) is the Pentraxin (PTX) domain. A disulfide bridge connects residues C54 and C115. The Ca(2+) site is built by D78, N79, E156, Q157, D158, and Q168.

The protein belongs to the pentraxin family. As to quaternary structure, homopentamer. Pentraxin (or pentaxin) have a discoid arrangement of 5 non-covalently bound subunits. Interacts with FCN1; may regulate monocyte activation by FCN1. Requires Ca(2+) as cofactor. In terms of tissue distribution, found in plasma.

The protein resides in the secreted. In terms of biological role, displays several functions associated with host defense: it promotes agglutination, bacterial capsular swelling, phagocytosis and complement fixation through its calcium-dependent binding to phosphorylcholine. Can interact with DNA and histones and may scavenge nuclear material released from damaged circulating cells. The sequence is that of C-reactive protein (CRP) from Homo sapiens (Human).